The chain runs to 20 residues: M-poneritoxin-Ng1f (20 aa).

Residue K20 is modified to Lysine amide.

In terms of tissue distribution, expressed by the venom gland.

Its subcellular location is the secreted. The protein localises to the target cell membrane. Its function is as follows. Has activity against Gram-positive bacteria. Has insecticidal and hemolytic activities. May act by disrupting the integrity of the bacterial cell membrane. This is M-poneritoxin-Ng1f from Neoponera goeldii (Ponerine ant).